The primary structure comprises 221 residues: MILVLAESAIELVPREIWSHPAVASDARRRGKRPGEILLDRARHHPAMAGLEDGARRGRPDIVHQVLLVFQYSLLNRRGLGRVYIHTRGDYIIQVKPQTRIPKNYNNFVSLMEQLYALGRAPPHGDSLMELHRGSLAGLLEQLGGRWVVLHERGARRRFAELGAALLNSVVVVGGFPHGDFSNRWVLEKAEAVYSVGDEPLDAAQAVCRAVAAAEASAGLI.

Residues G174, G179, and 196-201 (VGDEPL) each bind S-adenosyl-L-methionine.

This sequence belongs to the class IV-like SAM-binding methyltransferase superfamily. RNA methyltransferase NEP1 family. In terms of assembly, homodimer.

It carries out the reaction a pseudouridine in rRNA + S-adenosyl-L-methionine = an N(1)-methylpseudouridine in rRNA + S-adenosyl-L-homocysteine + H(+). In terms of biological role, methyltransferase involved in ribosomal biogenesis. Specifically catalyzes the N1-methylation of the pseudouridine corresponding to position 914 in M.jannaschii 16S rRNA. In Pyrobaculum neutrophilum (strain DSM 2338 / JCM 9278 / NBRC 100436 / V24Sta) (Thermoproteus neutrophilus), this protein is Ribosomal RNA small subunit methyltransferase Nep1.